A 413-amino-acid polypeptide reads, in one-letter code: Chloramphenicol efflux pump MT0201 (413 aa).

12 consecutive transmembrane segments (helical) span residues Leu23–Ala43, Val55–Pro75, Leu89–Phe109, Ala110–Ile130, Ile150–Leu170, Leu176–Leu196, Val226–Ile246, Asn256–Ala276, Ala286–Phe306, Ala312–Val332, Gly353–Leu373, and Leu378–Val398.

The protein belongs to the major facilitator superfamily.

It localises to the cell membrane. Functionally, active efflux pump that plays an important role in chloramphenicol resistance. This Mycobacterium tuberculosis (strain CDC 1551 / Oshkosh) protein is Chloramphenicol efflux pump MT0201.